The sequence spans 688 residues: Mitochondrial potassium channel ATP-binding subunit (688 aa).

The transit peptide at 1-31 directs the protein to the mitochondrion; sequence MLFHFLQAGLRQCRPPARLVGLETGLSGARG. 4 helical membrane-spanning segments follow: residues 115–135, 168–188, 268–288, and 342–362; these read PQLI…LLNI, LKLL…IVLL, GLLL…GSFL, and VLGV…NCIV. The 289-residue stretch at 121-409 folds into the ABC transmembrane type-1 domain; sequence LTAVLLAFGA…MSVLFGQVVR (289 aa). Residues 442 to 679 form the ABC transporter domain; sequence IHFKDVSFSY…GGLYADLIRR (238 aa). 477-484 is a binding site for ATP; that stretch reads GQSGGGKS.

It belongs to the ABC transporter superfamily. ABCB family. Multidrug resistance exporter (TC 3.A.1.201) subfamily. As to quaternary structure, component of the mitochondrial potassium channel (mitoK(ATP)).

The protein localises to the mitochondrion inner membrane. Its function is as follows. ATP-binding subunit of the mitochondrial ATP-gated potassium channel (mitoK(ATP)). Together with pore-forming subunit CCDC51/MITOK of the mitoK(ATP) channel, mediates ATP-dependent potassium currents across the mitochondrial inner membrane. An increase in ATP intracellular levels closes the channel, inhibiting K(+) transport, whereas a decrease in ATP levels enhances K(+) uptake in the mitochondrial matrix. Plays a role in mitochondrial iron transport. Required for maintenance of normal cardiac function, possibly by influencing mitochondrial iron export and regulating the maturation of cytosolic iron sulfur cluster-containing enzymes. In Xenopus tropicalis (Western clawed frog), this protein is Mitochondrial potassium channel ATP-binding subunit.